The sequence spans 194 residues: Crossover junction endodeoxyribonuclease RuvC (194 aa).

Residues D7, E68, and D141 contribute to the active site. D7, E68, and D141 together coordinate Mg(2+).

It belongs to the RuvC family. In terms of assembly, homodimer which binds Holliday junction (HJ) DNA. The HJ becomes 2-fold symmetrical on binding to RuvC with unstacked arms; it has a different conformation from HJ DNA in complex with RuvA. In the full resolvosome a probable DNA-RuvA(4)-RuvB(12)-RuvC(2) complex forms which resolves the HJ. Mg(2+) is required as a cofactor.

It localises to the cytoplasm. The enzyme catalyses Endonucleolytic cleavage at a junction such as a reciprocal single-stranded crossover between two homologous DNA duplexes (Holliday junction).. Functionally, the RuvA-RuvB-RuvC complex processes Holliday junction (HJ) DNA during genetic recombination and DNA repair. Endonuclease that resolves HJ intermediates. Cleaves cruciform DNA by making single-stranded nicks across the HJ at symmetrical positions within the homologous arms, yielding a 5'-phosphate and a 3'-hydroxyl group; requires a central core of homology in the junction. The consensus cleavage sequence is 5'-(A/T)TT(C/G)-3'. Cleavage occurs on the 3'-side of the TT dinucleotide at the point of strand exchange. HJ branch migration catalyzed by RuvA-RuvB allows RuvC to scan DNA until it finds its consensus sequence, where it cleaves and resolves the cruciform DNA. The polypeptide is Crossover junction endodeoxyribonuclease RuvC (Bifidobacterium longum (strain DJO10A)).